A 193-amino-acid chain; its full sequence is Ion-translocating oxidoreductase complex subunit A (193 aa).

6 consecutive transmembrane segments (helical) span residues 5–25 (FFFILSNILIDNFILVKFLGL), 47–67 (FVVVVSTVLLWFVNFFILLPF), 72–92 (LRIIVYMLIISFGVQLIEIIL), 102–122 (ILGIFLPLITTNCAVLAIPLF), 134–154 (ILYAVSASFGFTLVMVIFSSI), and 171–191 (PIVLITVSLISIVFMGFKGLV).

This sequence belongs to the NqrDE/RnfAE family. As to quaternary structure, the complex is composed of six subunits: RnfA, RnfB, RnfC, RnfD, RnfE and RnfG.

It localises to the cell inner membrane. Part of a membrane-bound complex that couples electron transfer with translocation of ions across the membrane. In Buchnera aphidicola subsp. Schizaphis graminum (strain Sg), this protein is Ion-translocating oxidoreductase complex subunit A.